A 100-amino-acid polypeptide reads, in one-letter code: Urease subunit gamma (100 aa).

This sequence belongs to the urease gamma subunit family. In terms of assembly, heterotrimer of UreA (gamma), UreB (beta) and UreC (alpha) subunits. Three heterotrimers associate to form the active enzyme.

The protein resides in the cytoplasm. The enzyme catalyses urea + 2 H2O + H(+) = hydrogencarbonate + 2 NH4(+). It functions in the pathway nitrogen metabolism; urea degradation; CO(2) and NH(3) from urea (urease route): step 1/1. The chain is Urease subunit gamma from Streptomyces coelicolor (strain ATCC BAA-471 / A3(2) / M145).